Reading from the N-terminus, the 90-residue chain is UPF0298 protein YlbG (90 aa).

This sequence belongs to the UPF0298 family.

It is found in the cytoplasm. This Bacillus subtilis (strain 168) protein is UPF0298 protein YlbG (ylbG).